Reading from the N-terminus, the 105-residue chain is Probable guanidinium efflux system subunit GdnD (105 aa).

The next 4 membrane-spanning stretches (helical) occupy residues 1–21 (MLHW…VALM), 32–52 (WVLL…YAME), 59–79 (AYAV…ILFY), and 85–105 (AKRI…KILS).

Belongs to the drug/metabolite transporter (DMT) superfamily. Small multidrug resistance (SMR) (TC 2.A.7.1) family. YkkC/YkkD subfamily. The efflux pump is composed of GdnC and GdnD.

The protein localises to the cell membrane. Its function is as follows. Probably involved in guanidinium transport. In vitro, confers resistance to a broad range of toxic compounds such as cationic dyes, neutral and anionic antimicrobials. This Bacillus subtilis (strain 168) protein is Probable guanidinium efflux system subunit GdnD.